The primary structure comprises 510 residues: ATP synthase subunit alpha (510 aa).

Residue 169-176 (GDRQTGKT) participates in ATP binding.

The protein belongs to the ATPase alpha/beta chains family. As to quaternary structure, F-type ATPases have 2 components, CF(1) - the catalytic core - and CF(0) - the membrane proton channel. CF(1) has five subunits: alpha(3), beta(3), gamma(1), delta(1), epsilon(1). CF(0) has three main subunits: a(1), b(2) and c(9-12). The alpha and beta chains form an alternating ring which encloses part of the gamma chain. CF(1) is attached to CF(0) by a central stalk formed by the gamma and epsilon chains, while a peripheral stalk is formed by the delta and b chains.

Its subcellular location is the cell inner membrane. It carries out the reaction ATP + H2O + 4 H(+)(in) = ADP + phosphate + 5 H(+)(out). Functionally, produces ATP from ADP in the presence of a proton gradient across the membrane. The alpha chain is a regulatory subunit. The protein is ATP synthase subunit alpha of Anaeromyxobacter sp. (strain K).